We begin with the raw amino-acid sequence, 304 residues long: MGAINQGISLFDESQTVINPINTNHLGFFFSFPSHSTLSSSSSSSSSSPSSLVSPFLGHNSLNSFLHNNPSSFISHPQDSINLMTNLPETLISSLSSSKQRDDHDGFLNLDHHRLTGSISSQRPLSNPWAWSCQAGYGSSQKNNHGSEIDVDDNDDEVGDGGGINDDDNGRHHHHDTPSRHDKHNTASLGVVSSLKMKKLKTRRKVREPRFCFKTLSEVDVLDDGYRWRKYGQKVVKNTQHPRSYYRCTQDKCRVKKRVERLADDPRMVITTYEGRHLHSPSNHLDDDSLSTSHLHPPLSNFFW.

Residues 141–190 form a disordered region; the sequence is QKNNHGSEIDVDDNDDEVGDGGGINDDDNGRHHHHDTPSRHDKHNTASLG. Over residues 149–159 the composition is skewed to acidic residues; the sequence is IDVDDNDDEVG. The segment at residues 217 to 282 is a DNA-binding region (WRKY); that stretch reads SEVDVLDDGY…YEGRHLHSPS (66 aa).

The protein belongs to the WRKY group II-c family.

Its subcellular location is the nucleus. Functionally, transcription factor. Interacts specifically with the W box (5'-(T)TGAC[CT]-3'), a frequently occurring elicitor-responsive cis-acting element. The protein is Probable WRKY transcription factor 13 (WRKY13) of Arabidopsis thaliana (Mouse-ear cress).